Here is a 605-residue protein sequence, read N- to C-terminus: SET domain-containing protein SNOG_11806 (605 aa).

The segment at 68 to 132 (TLDLTGMKTP…SRKGTGGLRV (65 aa)) is disordered. The segment covering 75-89 (KTPQPSRSPTVTRNV) has biased composition (polar residues). Positions 104–115 (ESADDDDDDLQD) are enriched in acidic residues. Positions 473 to 579 (PPVQIYRTAE…AGSEITVDYG (107 aa)) constitute an SET domain.

The protein belongs to the class V-like SAM-binding methyltransferase superfamily.

This is SET domain-containing protein SNOG_11806 from Phaeosphaeria nodorum (strain SN15 / ATCC MYA-4574 / FGSC 10173) (Glume blotch fungus).